Here is a 120-residue protein sequence, read N- to C-terminus: UPF0231 protein YacL (120 aa).

This sequence belongs to the UPF0231 family.

The polypeptide is UPF0231 protein YacL (Escherichia coli (strain SMS-3-5 / SECEC)).